Reading from the N-terminus, the 366-residue chain is Isocitrate dehydrogenase [NAD] subunit alpha, mitochondrial (366 aa).

The transit peptide at 1-27 (MAGPAWISKVSRLLGAFHNQKQVTRGF) directs the protein to the mitochondrion. N6-succinyllysine is present on lysine 77. The residue at position 101 (threonine 101) is a Phosphothreonine. Substrate is bound by residues arginine 115, arginine 125, and arginine 146. Lysine 223 bears the N6-acetyllysine mark. Residues aspartate 233, aspartate 257, and aspartate 261 each coordinate Mg(2+). The residue at position 343 (lysine 343) is an N6-acetyllysine; alternate. Lysine 343 carries the N6-succinyllysine; alternate modification. Residue lysine 350 is modified to N6-succinyllysine.

This sequence belongs to the isocitrate and isopropylmalate dehydrogenases family. As to quaternary structure, heterooligomer of subunits alpha (IDH3A), beta (IDH3B), and gamma (IDH3G) in the apparent ratio of 2:1:1. The heterodimer containing one IDH3A and one IDH3B subunit and the heterodimer containing one IDH3A and one IDH3G subunit assemble into a heterotetramer (which contains two subunits of IDH3A, one of IDH3B and one of IDH3G) and further into the heterooctamer. Mg(2+) serves as cofactor. Requires Mn(2+) as cofactor.

The protein localises to the mitochondrion. It catalyses the reaction D-threo-isocitrate + NAD(+) = 2-oxoglutarate + CO2 + NADH. With respect to regulation, the heterotetramer and the heterodimer composed of IDH3A and IDH3G subunits can be allosterically activated by citrate (CIT) or/and ADP, and the two activators can act independently or synergistically. The heterodimer composed of IDH3A and IDH3B subunits cannot be allosterically regulated and the allosteric regulation of the heterotetramer is through the IDH3G subunit and not the IDH3B subunit. The IDH3G subunit contains the allosteric site which consists of a CIT-binding site and an ADP-binding site, and the binding of CIT and ADP causes conformational changes at the allosteric site which are transmitted to the active site in the catalytic subunit (IDH3A) through a cascade of conformational changes at the heterodimer interface, leading to stabilization of the isocitrate-binding at the active site and thus activation of the enzyme. ATP can activate the heterotetramer and the heterodimer composed of IDH3A and IDH3G subunits at low concentrations but inhibits their activities at high concentrations, whereas ATP exhibits only inhibitory effect on the heterodimer composed of IDH3A and IDH3B subunits. Functionally, catalytic subunit of the enzyme which catalyzes the decarboxylation of isocitrate (ICT) into alpha-ketoglutarate. The heterodimer composed of the alpha (IDH3A) and beta (IDH3B) subunits and the heterodimer composed of the alpha (IDH3A) and gamma (IDH3G) subunits, have considerable basal activity but the full activity of the heterotetramer (containing two subunits of IDH3A, one of IDH3B and one of IDH3G) requires the assembly and cooperative function of both heterodimers. This is Isocitrate dehydrogenase [NAD] subunit alpha, mitochondrial from Bos taurus (Bovine).